Reading from the N-terminus, the 365-residue chain is Beta-parvin (365 aa).

Residues 1–12 are compositionally biased toward pro residues; the sequence is MSSAPPRSPTPR. The disordered stretch occupies residues 1–52; it reads MSSAPPRSPTPRAPKMKKDESFLGKLGGTLARKKKTREVTDLQEEGKSAINS. Ser8 is modified (phosphoserine). The span at 37-47 shows a compositional bias: basic and acidic residues; it reads REVTDLQEEGK. 2 consecutive Calponin-homology (CH) domains span residues 88 to 195 and 255 to 362; these read KELV…MHFR and NLVK…TKYK.

This sequence belongs to the parvin family. As to quaternary structure, interacts with ILK, ARHGEF6, PXN (via LD motifs), ACTN2 and actin. Interacts with DYSF. Post-translationally, phosphorylated by ILK. As to expression, expressed predominantly in heart and moderately in spleen, lung and skeletal muscle.

The protein localises to the cell junction. It is found in the focal adhesion. The protein resides in the cell membrane. It localises to the cytoplasm. Its subcellular location is the cytoskeleton. The protein localises to the cell projection. It is found in the lamellipodium. The protein resides in the myofibril. It localises to the sarcomere. Its subcellular location is the z line. In terms of biological role, adapter protein that plays a role in integrin signaling via ILK and in activation of the GTPases CDC42 and RAC1 by guanine exchange factors, such as ARHGEF6. Is involved in the reorganization of the actin cytoskeleton and formation of lamellipodia. Plays a role in cell adhesion, cell spreading, establishment or maintenance of cell polarity, and cell migration. The chain is Beta-parvin (Parvb) from Mus musculus (Mouse).